A 360-amino-acid chain; its full sequence is MSQSAVSFQISPVSKTQDPLIQQKIDLKTKPPGALGQLESLALQIARVQATDSQQTDQPQNTVLKIVHPTMLVFAGDHGIAAEGVSIAPSEVTRQMVQNFAHGGAAINVFCRQVGFTLEVIDCGILTPVEGVEGIIDQRLGAGTGAIHLEPAMALETVDKGFAMARDLIERHHQAGCNLVAFGEMGIGNTSAAAAIMAAIMQLDVIDCVGRGTGINSETLERKLMLIELALLLHQSALTGPKSVLACLGGFEIVQMTGAMLAAAERKMLVVVDGFIATAAALVAVQIAPNVRDYLIFAHQSDEQGHQRMLEFLQAKPLLSLGLRLGEGTGAALALPLIQASVNFYNQMASFSDAGIEAVV.

The active-site Proton acceptor is E327.

This sequence belongs to the CobT family.

It carries out the reaction 5,6-dimethylbenzimidazole + nicotinate beta-D-ribonucleotide = alpha-ribazole 5'-phosphate + nicotinate + H(+). It participates in nucleoside biosynthesis; alpha-ribazole biosynthesis; alpha-ribazole from 5,6-dimethylbenzimidazole: step 1/2. In terms of biological role, catalyzes the synthesis of alpha-ribazole-5'-phosphate from nicotinate mononucleotide (NAMN) and 5,6-dimethylbenzimidazole (DMB). This is Nicotinate-nucleotide--dimethylbenzimidazole phosphoribosyltransferase from Shewanella baltica (strain OS223).